A 268-amino-acid chain; its full sequence is Undecaprenyl-diphosphatase (268 aa).

A run of 7 helical transmembrane segments spans residues 47-67, 83-103, 109-129, 144-164, 184-204, 217-237, and 248-268; these read FAVLIQLGAILAILALYFVKL, FVIGVLVAFLPAAVIGAAFGG, LFNPWVVCFSLIVGGAILLWV, FPLLTYFYIGCAQCTAMIPGV, AAEFSFFLAIPTMLGAFVYDL, IIVAIGFVVSFITAIIVVKTF, and LFAWWRVIVGTLGLIALALGL.

The protein belongs to the UppP family.

Its subcellular location is the cell inner membrane. The enzyme catalyses di-trans,octa-cis-undecaprenyl diphosphate + H2O = di-trans,octa-cis-undecaprenyl phosphate + phosphate + H(+). Functionally, catalyzes the dephosphorylation of undecaprenyl diphosphate (UPP). Confers resistance to bacitracin. This Rhodopseudomonas palustris (strain ATCC BAA-98 / CGA009) protein is Undecaprenyl-diphosphatase.